Here is a 626-residue protein sequence, read N- to C-terminus: Serine/threonine-protein kinase PknH (626 aa).

At 1–403 (MSDAQDSRVG…QTPRKTNPWP (403 aa)) the chain is on the cytoplasmic side. The Protein kinase domain maps to 16-276 (YHLKRLLGRG…DLALAAHEAL (261 aa)). ATP contacts are provided by residues 22–30 (LGRGGMGEV) and lysine 45. Aspartate 139 acts as the Proton acceptor in catalysis. Position 170 is a phosphothreonine (threonine 170). Residues 292–396 (QESTLPAPPK…GGPSPWAQTP (105 aa)) form a disordered region. Composition is skewed to pro residues over residues 297–308 (PAPPKPVPPPTM) and 316–342 (RQPP…PAQP). Residues 343-355 (GPAGQRPGPTGQP) show a composition bias toward low complexity. The helical transmembrane segment at 404-424 (LVAGAAAVVLVLVLGAIGIWI) threads the bilayer. Residues 425–626 (AIRPKPVQPP…AKIVDKVNKE (202 aa)) lie on the Extracellular side of the membrane. Intrachain disulfides connect cysteine 482–cysteine 545 and cysteine 587–cysteine 604.

This sequence belongs to the protein kinase superfamily. Ser/Thr protein kinase family. The cofactor is a divalent metal cation. In terms of processing, autophosphorylated on threonine and serine residues. Dephosphorylated by PstP.

Its subcellular location is the cell membrane. It catalyses the reaction L-seryl-[protein] + ATP = O-phospho-L-seryl-[protein] + ADP + H(+). The catalysed reaction is L-threonyl-[protein] + ATP = O-phospho-L-threonyl-[protein] + ADP + H(+). Its activity is regulated as follows. Inhibited by the kinase inhibitors staurosporine and H-7. In terms of biological role, may regulate bacterial growth in response to external signals to facilitate adaptation to the host environment. In vitro, phosphorylates several substrates such as EmbR, DevR (DosR), DacB1 and Rv0681. This Mycobacterium tuberculosis (strain ATCC 25618 / H37Rv) protein is Serine/threonine-protein kinase PknH (pknH).